Reading from the N-terminus, the 230-residue chain is Leucyl/phenylalanyl-tRNA--protein transferase (230 aa).

Belongs to the L/F-transferase family.

The protein localises to the cytoplasm. It catalyses the reaction N-terminal L-lysyl-[protein] + L-leucyl-tRNA(Leu) = N-terminal L-leucyl-L-lysyl-[protein] + tRNA(Leu) + H(+). It carries out the reaction N-terminal L-arginyl-[protein] + L-leucyl-tRNA(Leu) = N-terminal L-leucyl-L-arginyl-[protein] + tRNA(Leu) + H(+). The catalysed reaction is L-phenylalanyl-tRNA(Phe) + an N-terminal L-alpha-aminoacyl-[protein] = an N-terminal L-phenylalanyl-L-alpha-aminoacyl-[protein] + tRNA(Phe). Its function is as follows. Functions in the N-end rule pathway of protein degradation where it conjugates Leu, Phe and, less efficiently, Met from aminoacyl-tRNAs to the N-termini of proteins containing an N-terminal arginine or lysine. This is Leucyl/phenylalanyl-tRNA--protein transferase from Proteus mirabilis (strain HI4320).